The chain runs to 217 residues: Killer cell lectin-like receptor subfamily B member 1F (217 aa).

Over 1 to 45 (MDTSKVHGNVKPFRCPGYKQASSPSFSPDACRCPHWHHLALKSGC) the chain is Cytoplasmic. Residues 31 to 34 (CRCP) carry the LCK-binding motif motif. A helical; Signal-anchor for type II membrane protein transmembrane segment spans residues 46-66 (AGLILLLLSLIGLSVLVRFLV). At 67–217 (QKPPIEKCSV…WICQKTLIHV (151 aa)) the chain is on the extracellular side. N81 is a glycosylation site (N-linked (GlcNAc...) asparagine). In terms of domain architecture, C-type lectin spans 101–211 (HWNKCLFVSQ…CSSDNHWICQ (111 aa)). Intrachain disulfides connect C122–C210 and C189–C202.

In terms of tissue distribution, highly expressed in dendritic cells. Detectable in natural killer cells.

Its subcellular location is the membrane. Its function is as follows. Binds CLEC2I/Clr-g leading to activation of natural killer cells or costimulation of IL-2 production and proliferation of T-cells in response to antigen stimulation. May contribute to the formation of the immunological synapse between T-cells and antigen-presenting dendritic cells. The sequence is that of Killer cell lectin-like receptor subfamily B member 1F (Klrb1f) from Mus musculus (Mouse).